Here is a 131-residue protein sequence, read N- to C-terminus: Period circadian protein (131 aa).

A disordered region spans residues 29–109 (VTAPVELDPP…NSAGGASGGV (81 aa)). Low complexity predominate over residues 71 to 93 (SGNFTTGSNVRMSSVTNTSNAGT). The span at 94 to 109 (GTSGGGNSAGGASGGV) shows a compositional bias: gly residues.

In terms of assembly, forms a heterodimer with timeless (TIM); the complex then translocates into the nucleus. Phosphorylated with a circadian rhythmicity, probably by the double-time protein (dbt). Phosphorylation could be implicated in the stability of per monomer and in the formation of heterodimer per-tim.

The protein resides in the nucleus. It is found in the cytoplasm. Its subcellular location is the perinuclear region. Essential for biological clock functions. Determines the period length of circadian and ultradian rhythms; an increase in PER dosage leads to shortened circadian rhythms and a decrease leads to lengthened circadian rhythms. Essential for the circadian rhythmicity of locomotor activity, eclosion behavior, and for the rhythmic component of the male courtship song that originates in the thoracic nervous system. The biological cycle depends on the rhythmic formation and nuclear localization of the TIM-PER complex. Light induces the degradation of TIM, which promotes elimination of PER. Nuclear activity of the heterodimer coordinatively regulates PER and TIM transcription through a negative feedback loop. Behaves as a negative element in circadian transcriptional loop. Does not appear to bind DNA, suggesting indirect transcriptional inhibition. The sequence is that of Period circadian protein (per) from Zaprionus tuberculatus (Vinegar fly).